The sequence spans 322 residues: Epiphycan (322 aa).

The N-terminal stretch at 1–19 (MGMLARVALGLIIIDAVLA) is a signal peptide. The disordered stretch occupies residues 58–108 (KVSERLSGNRELLTPGPQLGDNQDEDKDEESTPRLIDGSSPQEPEFPGLLG). O-linked (Xyl...) (dermatan sulfate) serine glycosylation occurs at serine 64. A glycan (O-linked (GalNAc...) serine) is linked at serine 96. In terms of domain architecture, LRRNT spans 106–143 (LLGPHTNEDFPTCLLCTCISTTVYCDDHELDAIPPLPK). A disulfide bond links cysteine 118 and cysteine 130. LRR repeat units lie at residues 144-165 (KTTY…DFAS), 168-189 (DLKR…AFRK), 192-213 (HLQE…PNTL), 238-258 (DLHH…PLPE), and 259-280 (SLRA…TFCN). Residues cysteine 279 and cysteine 312 are joined by a disulfide bond. 2 N-linked (GlcNAc...) asparagine glycosylation sites follow: asparagine 283 and asparagine 302. An LRR 6 repeat occupies 290-310 (ALEDIRLDGNPINLSRTPQAY).

This sequence belongs to the small leucine-rich proteoglycan (SLRP) family. SLRP class III subfamily. The O-linked polysaccharide on Ser-96 is probably the mucin type linked to GalNAc. There is one glycosaminoglycan chain, known to be dermatan sulfate, and it is probably the O-glycosylation at Ser-64. Confined to the middle zone of embryonic epiphyseal cartilage consisting of flattened chondrocytes and the ossifying region in the limb buds of chick embryos. Has also been detected in testis.

It localises to the secreted. Its subcellular location is the extracellular space. It is found in the extracellular matrix. Its function is as follows. May have a role in bone formation and also in establishing the ordered structure of cartilage through matrix organization. The chain is Epiphycan (Epyc) from Mus musculus (Mouse).